The following is a 399-amino-acid chain: MNTLDFDKKPEDTRVVVAMSGGVDSSVVAGILKRQGYDVLGITLQLYDHGAAVHRAGSCCAGQDIDDARRVCETIGIPHYVLDYEKRFRETVINPFAESYVAGETPIPCVSCNQTVKFADLLATAKELGADALATGHYIRSRPNPSADHPGRRALYRPADADRDQSYFLFATTQEQIDYLRFPLGGMPKAETRALAEEMGLVVAKKADSQDICFVPQGKYSDVIAKLKPNAALAGEIVHLDGRVLGRHEGILHYTIGQRRGIGVATGDPLYVVFLDARSRRVIVGPKEALETHRVYLRDVNWLGDEPLLEAASGEGFACYAKVRSTRPPEPAVLRADKDGIYVDLTIGEAGVAPGQACALYSAPGDDARVYGGGFIERSEREPMAEASLKALLASPVAA.

Residues 18 to 25 (AMSGGVDS) and L44 each bind ATP. C112 serves as the catalytic Nucleophile. A disulfide bond links C112 and C213. Position 136 (G136) interacts with ATP. The interval 163–165 (RDQ) is interaction with tRNA. C213 serves as the catalytic Cysteine persulfide intermediate.

It belongs to the MnmA/TRMU family.

It localises to the cytoplasm. The enzyme catalyses S-sulfanyl-L-cysteinyl-[protein] + uridine(34) in tRNA + AH2 + ATP = 2-thiouridine(34) in tRNA + L-cysteinyl-[protein] + A + AMP + diphosphate + H(+). Catalyzes the 2-thiolation of uridine at the wobble position (U34) of tRNA, leading to the formation of s(2)U34. This is tRNA-specific 2-thiouridylase MnmA from Rhizobium rhizogenes (strain K84 / ATCC BAA-868) (Agrobacterium radiobacter).